We begin with the raw amino-acid sequence, 240 residues long: Probable septum site-determining protein MinC (240 aa).

This sequence belongs to the MinC family. As to quaternary structure, interacts with MinD and FtsZ.

Functionally, cell division inhibitor that blocks the formation of polar Z ring septums. Rapidly oscillates between the poles of the cell to destabilize FtsZ filaments that have formed before they mature into polar Z rings. Prevents FtsZ polymerization. This chain is Probable septum site-determining protein MinC, found in Acinetobacter baumannii (strain AYE).